The following is a 280-amino-acid chain: 4-diphosphocytidyl-2-C-methyl-D-erythritol kinase (280 aa).

Lys11 is an active-site residue. 95–105 contributes to the ATP binding site; sequence PVAAGLGGGSS. Asp137 is an active-site residue.

This sequence belongs to the GHMP kinase family. IspE subfamily.

It catalyses the reaction 4-CDP-2-C-methyl-D-erythritol + ATP = 4-CDP-2-C-methyl-D-erythritol 2-phosphate + ADP + H(+). It participates in isoprenoid biosynthesis; isopentenyl diphosphate biosynthesis via DXP pathway; isopentenyl diphosphate from 1-deoxy-D-xylulose 5-phosphate: step 3/6. Its function is as follows. Catalyzes the phosphorylation of the position 2 hydroxy group of 4-diphosphocytidyl-2C-methyl-D-erythritol. The polypeptide is 4-diphosphocytidyl-2-C-methyl-D-erythritol kinase (Pelobacter propionicus (strain DSM 2379 / NBRC 103807 / OttBd1)).